The primary structure comprises 381 residues: MGKEEISTTKYLIHAQINANGIVEKPDVVGAIFGQTEGLLSNDLDLREFQKTGRIGRIKVNITSRGGKSKGEIIIPSSLDRVETAILAASLETINRVGPCEAYIQVTKVEDVRAVKRKRVVERAKEIYASMMEEVTPESLKMIEEVKEAMRVHEITEYGEEKLPAGPNVETSDAILVVEGRSDVLNLLKYGIKNAIAVEGVSVPKTVADLTRKKTVTAFVDGDRGGELILKELLQVGEIDYVTRAPKGKEVEDLEKDEIMMALRNKVPVEQFYHDLGMKKEKKKTEDKMVLLRNILKELEGTGNAEILDDALNILREVKVENLYDELSRVNNHPYAVVFDGVITQRLVDLSFEKGLRYLVAVRSGDIVKKPHNLKLITGHT.

Positions 173 to 259 constitute a Toprim domain; it reads DAILVVEGRS…EVEDLEKDEI (87 aa). Mg(2+) is bound by residues glutamate 179, aspartate 221, and aspartate 223.

The protein belongs to the archaeal DnaG primase family. As to quaternary structure, forms a ternary complex with MCM helicase and DNA. Component of the archaeal exosome complex. Mg(2+) is required as a cofactor.

It catalyses the reaction ssDNA + n NTP = ssDNA/pppN(pN)n-1 hybrid + (n-1) diphosphate.. Functionally, RNA polymerase that catalyzes the synthesis of short RNA molecules used as primers for DNA polymerase during DNA replication. Also part of the exosome, which is a complex involved in RNA degradation. Acts as a poly(A)-binding protein that enhances the interaction between heteromeric, adenine-rich transcripts and the exosome. This Methanothermobacter thermautotrophicus (strain ATCC 29096 / DSM 1053 / JCM 10044 / NBRC 100330 / Delta H) (Methanobacterium thermoautotrophicum) protein is DNA primase DnaG.